The following is a 755-amino-acid chain: Dolichyl-phosphate-mannose--protein mannosyltransferase 4 (755 aa).

The interval 1–23 (MSQTLKKRGGNSSGRKSPTTSNI) is disordered. Residue asparagine 11 is glycosylated (N-linked (GlcNAc...) asparagine). The span at 13–23 (SGRKSPTTSNI) shows a compositional bias: polar residues. Helical transmembrane passes span 92-112 (FFDLHPPFAKLLIAFVGWLIG), 147-167 (IVPIMFLTMKTLGFSVAACLF), 185-205 (ILLDATLILSVALTIFSYSKF), 212-232 (SFSSKWWTWLLATGVSLSCVI), 237-257 (VGVFTYLTIGIAVIHELWILL), and 278-298 (ALIIVPFCIYLYWFYLHFAIL). MIR domains are found at residues 325–389 (SKPV…IVPT), 396–454 (GTKV…LRLH), and 466–523 (KKEI…FDLI). N-linked (GlcNAc...) asparagine glycosylation occurs at asparagine 445. 3 consecutive transmembrane segments (helical) span residues 595-615 (IFFIGNIIGFWLEVCFLSIYI), 640-660 (LYNTLGFLFVGWAAHYLPFFL), and 670-690 (YLPAHLVAALFSGGLVEFICS). Asparagine 691 carries N-linked (GlcNAc...) asparagine glycosylation. The chain crosses the membrane as a helical span at residues 706–726 (YKIIAVVAACSTAIIWFFFYF).

Belongs to the glycosyltransferase 39 family. In terms of assembly, forms a functional homodimer.

It localises to the endoplasmic reticulum membrane. The enzyme catalyses a di-trans,poly-cis-dolichyl beta-D-mannosyl phosphate + L-seryl-[protein] = 3-O-(alpha-D-mannosyl)-L-seryl-[protein] + a di-trans,poly-cis-dolichyl phosphate + H(+). It catalyses the reaction a di-trans,poly-cis-dolichyl beta-D-mannosyl phosphate + L-threonyl-[protein] = 3-O-(alpha-D-mannosyl)-L-threonyl-[protein] + a di-trans,poly-cis-dolichyl phosphate + H(+). It functions in the pathway protein modification; protein glycosylation. Its function is as follows. Protein mannosyltransferase (PMT) involved in hyphal growth and drug sensitivity. Transfers mannose from Dol-P-mannose to Ser or Thr residues on proteins. PMT1, PMT2 and PMT4 account for most of the protein-O-glycosylation activity, while PMT5 and PMT6 may specifically modulate a much narrower spectrum of target proteins. Accounts for the O-glycosylation of AXL2, responsible for bud site selection, as well as of the SEC20 t-SNARE component. O-glycosylation of SEC20 is essential for its stability. Required for biofilm formation. In Candida albicans (strain SC5314 / ATCC MYA-2876) (Yeast), this protein is Dolichyl-phosphate-mannose--protein mannosyltransferase 4.